A 427-amino-acid chain; its full sequence is Serine--tRNA ligase (427 aa).

Residue 231–233 (TAE) coordinates L-serine. An ATP-binding site is contributed by 262–264 (RSE). Glutamate 285 serves as a coordination point for L-serine. An ATP-binding site is contributed by 349-352 (EISS). Serine 385 lines the L-serine pocket.

The protein belongs to the class-II aminoacyl-tRNA synthetase family. Type-1 seryl-tRNA synthetase subfamily. In terms of assembly, homodimer. The tRNA molecule binds across the dimer.

The protein localises to the cytoplasm. It catalyses the reaction tRNA(Ser) + L-serine + ATP = L-seryl-tRNA(Ser) + AMP + diphosphate + H(+). The catalysed reaction is tRNA(Sec) + L-serine + ATP = L-seryl-tRNA(Sec) + AMP + diphosphate + H(+). The protein operates within aminoacyl-tRNA biosynthesis; selenocysteinyl-tRNA(Sec) biosynthesis; L-seryl-tRNA(Sec) from L-serine and tRNA(Sec): step 1/1. Its function is as follows. Catalyzes the attachment of serine to tRNA(Ser). Is also able to aminoacylate tRNA(Sec) with serine, to form the misacylated tRNA L-seryl-tRNA(Sec), which will be further converted into selenocysteinyl-tRNA(Sec). This chain is Serine--tRNA ligase, found in Listeria monocytogenes serotype 4b (strain CLIP80459).